A 209-amino-acid polypeptide reads, in one-letter code: Large ribosomal subunit protein uL3 (209 aa).

Residues Tyr-127–Ala-147 form a disordered region.

This sequence belongs to the universal ribosomal protein uL3 family. Part of the 50S ribosomal subunit. Forms a cluster with proteins L14 and L19.

In terms of biological role, one of the primary rRNA binding proteins, it binds directly near the 3'-end of the 23S rRNA, where it nucleates assembly of the 50S subunit. This Finegoldia magna (strain ATCC 29328 / DSM 20472 / WAL 2508) (Peptostreptococcus magnus) protein is Large ribosomal subunit protein uL3.